The chain runs to 75 residues: Iota-conotoxin-like R11.3 (75 aa).

Residues 1-19 form the signal peptide; the sequence is MKLCLTFLLVLMILASVTG. Residues 20–34 constitute a propeptide that is removed on maturation; the sequence is EKLSEQTLRRAARKN. Cystine bridges form between C39/C53, C46/C58, C52/C63, and C57/C70.

This sequence belongs to the conotoxin I1 superfamily. Expressed by the venom duct.

The protein resides in the secreted. Functionally, iota-conotoxins bind to voltage-gated sodium channels (Nav) and act as agonists by shifting the voltage-dependence of activation to more hyperpolarized levels. Produces general excitatory symptoms. This chain is Iota-conotoxin-like R11.3, found in Conus radiatus (Rayed cone).